We begin with the raw amino-acid sequence, 398 residues long: Cysteine protease ATG4A (398 aa).

C77 functions as the Nucleophile in the catalytic mechanism. Residues D279 and H281 contribute to the active site. Residues F393–L396 carry the LIR motif.

Belongs to the peptidase C54 family. As to quaternary structure, interacts with ATG9A; the interaction is direct.

It is found in the cytoplasm. The catalysed reaction is [protein]-C-terminal L-amino acid-glycyl-phosphatidylethanolamide + H2O = [protein]-C-terminal L-amino acid-glycine + a 1,2-diacyl-sn-glycero-3-phosphoethanolamine. Inhibited by N-ethylmaleimide. Redox-regulated during autophagy since reducing conditions activate ATG4A whereas an oxidizing environment such as the presence of H(2)O(2) inhibits its activity. Its function is as follows. Cysteine protease that plays a key role in autophagy by mediating both proteolytic activation and delipidation of ATG8 family proteins. The protease activity is required for proteolytic activation of ATG8 family proteins: cleaves the C-terminal amino acid of ATG8 proteins to reveal a C-terminal glycine. Exposure of the glycine at the C-terminus is essential for ATG8 proteins conjugation to phosphatidylethanolamine (PE) and insertion to membranes, which is necessary for autophagy. Preferred substrate is GABARAPL2 followed by MAP1LC3A and GABARAP. Protease activity is also required to counteract formation of high-molecular weight conjugates of ATG8 proteins (ATG8ylation): acts as a deubiquitinating-like enzyme that removes ATG8 conjugated to other proteins, such as ATG3. In addition to the protease activity, also mediates delipidation of ATG8 family proteins. Catalyzes delipidation of PE-conjugated forms of ATG8 proteins during macroautophagy. Compared to ATG4B, the major protein for proteolytic activation of ATG8 proteins, shows weaker ability to cleave the C-terminal amino acid of ATG8 proteins, while it displays stronger delipidation activity. Involved in phagophore growth during mitophagy independently of its protease activity and of ATG8 proteins: acts by regulating ATG9A trafficking to mitochondria and promoting phagophore-endoplasmic reticulum contacts during the lipid transfer phase of mitophagy. This is Cysteine protease ATG4A from Pongo abelii (Sumatran orangutan).